The following is a 27-amino-acid chain: Secretin (27 aa).

Methionine 27 carries the methionine amide modification.

It belongs to the glucagon family.

Its subcellular location is the secreted. Functionally, hormone involved in different processes, such as regulation of the pH of the duodenal content, food intake and water homeostasis. Exerts its biological effects by binding to secretin receptor (SCTR), a G-protein coupled receptor expressed in the basolateral domain of several cells. This is Secretin from Gallus gallus (Chicken).